The following is a 113-amino-acid chain: Large ribosomal subunit protein eL34 (113 aa).

Belongs to the eukaryotic ribosomal protein eL34 family.

The sequence is that of Large ribosomal subunit protein eL34 from Methanopyrus kandleri (strain AV19 / DSM 6324 / JCM 9639 / NBRC 100938).